Here is a 127-residue protein sequence, read N- to C-terminus: Large ribosomal subunit protein bL20 (127 aa).

The protein belongs to the bacterial ribosomal protein bL20 family.

In terms of biological role, binds directly to 23S ribosomal RNA and is necessary for the in vitro assembly process of the 50S ribosomal subunit. It is not involved in the protein synthesizing functions of that subunit. This chain is Large ribosomal subunit protein bL20, found in Bifidobacterium longum (strain NCC 2705).